Consider the following 324-residue polypeptide: tRNA N6-adenosine threonylcarbamoyltransferase (324 aa).

Residues H107, H111, and Y127 each contribute to the Fe cation site. Residues 127-131 (YVSGG), D159, G172, E176, and N257 each bind substrate. D285 serves as a coordination point for Fe cation.

The protein belongs to the KAE1 / TsaD family. Monomer. Component of the KEOPS complex that consists of Kae1, Bud32, Cgi121 and Pcc1; the whole complex dimerizes. Fe(2+) serves as cofactor.

The protein localises to the cytoplasm. It carries out the reaction L-threonylcarbamoyladenylate + adenosine(37) in tRNA = N(6)-L-threonylcarbamoyladenosine(37) in tRNA + AMP + H(+). Functionally, required for the formation of a threonylcarbamoyl group on adenosine at position 37 (t(6)A37) in tRNAs that read codons beginning with adenine. Is a component of the KEOPS complex that is probably involved in the transfer of the threonylcarbamoyl moiety of threonylcarbamoyl-AMP (TC-AMP) to the N6 group of A37. Kae1 likely plays a direct catalytic role in this reaction, but requires other protein(s) of the complex to fulfill this activity. In vitro, binds tRNA, ssRNA, both single- and double-stranded DNA, and exhibits a low ATPase activity. The chain is tRNA N6-adenosine threonylcarbamoyltransferase from Pyrococcus abyssi (strain GE5 / Orsay).